We begin with the raw amino-acid sequence, 175 residues long: ADP-ribosylation factor 6 (175 aa).

Gly-2 is lipidated: N-myristoyl glycine. Residues 20 to 27 (GLDAAGKT), 63 to 67 (DVGGQ), and 122 to 125 (NKQD) contribute to the GTP site.

Belongs to the small GTPase superfamily. Arf family. Expressed in the head (at protein level).

It is found in the golgi apparatus. Its activity is regulated as follows. Activation is generally mediated by a guanine exchange factor (GEF), while inactivation through hydrolysis of bound GTP is catalyzed by a GTPase activating protein (GAP). May be activated by Efa6. GTP-binding protein involved in protein trafficking; may modulate vesicle budding and uncoating within the Golgi apparatus. Promotes cell movement and remodeling of the actin cytoskeleton during compound eye morphogenesis. Required for normal ethanol-induced tolerance and preference. Probably after Efa6-mediated activation, counteracts ethanol-induced sedation. This Drosophila melanogaster (Fruit fly) protein is ADP-ribosylation factor 6.